The primary structure comprises 224 residues: Small ribosomal subunit protein uS3 (224 aa).

A KH type-2 domain is found at 39–107; the sequence is VRKYIQNALA…PVHINIEEIR (69 aa).

The protein belongs to the universal ribosomal protein uS3 family. As to quaternary structure, part of the 30S ribosomal subunit. Forms a tight complex with proteins S10 and S14.

Binds the lower part of the 30S subunit head. Binds mRNA in the 70S ribosome, positioning it for translation. The protein is Small ribosomal subunit protein uS3 of Saccharophagus degradans (strain 2-40 / ATCC 43961 / DSM 17024).